The sequence spans 453 residues: UDP-N-acetylmuramoylalanine--D-glutamate ligase (453 aa).

Residue 117–123 (GSNGKST) participates in ATP binding.

This sequence belongs to the MurCDEF family.

The protein localises to the cytoplasm. It catalyses the reaction UDP-N-acetyl-alpha-D-muramoyl-L-alanine + D-glutamate + ATP = UDP-N-acetyl-alpha-D-muramoyl-L-alanyl-D-glutamate + ADP + phosphate + H(+). It functions in the pathway cell wall biogenesis; peptidoglycan biosynthesis. Its function is as follows. Cell wall formation. Catalyzes the addition of glutamate to the nucleotide precursor UDP-N-acetylmuramoyl-L-alanine (UMA). The polypeptide is UDP-N-acetylmuramoylalanine--D-glutamate ligase (Chromobacterium violaceum (strain ATCC 12472 / DSM 30191 / JCM 1249 / CCUG 213 / NBRC 12614 / NCIMB 9131 / NCTC 9757 / MK)).